A 429-amino-acid chain; its full sequence is Adenylosuccinate synthetase (429 aa).

GTP-binding positions include 12–18 and 40–42; these read GDEGKGK and GHT. The active-site Proton acceptor is the Asp13. Mg(2+)-binding residues include Asp13 and Gly40. IMP is bound by residues 13-16, 38-41, Thr128, Arg142, Gln223, Thr238, and Arg302; these read DEGK and NAGH. His41 serves as the catalytic Proton donor. 298 to 304 contributes to the substrate binding site; that stretch reads VNTGRKR. GTP is bound by residues Arg304, 330–332, and 412–414; these read KLD and GVG.

The protein belongs to the adenylosuccinate synthetase family. Homodimer. Requires Mg(2+) as cofactor.

The protein localises to the cytoplasm. The catalysed reaction is IMP + L-aspartate + GTP = N(6)-(1,2-dicarboxyethyl)-AMP + GDP + phosphate + 2 H(+). It functions in the pathway purine metabolism; AMP biosynthesis via de novo pathway; AMP from IMP: step 1/2. Functionally, plays an important role in the de novo pathway of purine nucleotide biosynthesis. Catalyzes the first committed step in the biosynthesis of AMP from IMP. This chain is Adenylosuccinate synthetase, found in Corynebacterium diphtheriae (strain ATCC 700971 / NCTC 13129 / Biotype gravis).